A 461-amino-acid polypeptide reads, in one-letter code: Asparagine--tRNA ligase (461 aa).

It belongs to the class-II aminoacyl-tRNA synthetase family. As to quaternary structure, homodimer.

Its subcellular location is the cytoplasm. It catalyses the reaction tRNA(Asn) + L-asparagine + ATP = L-asparaginyl-tRNA(Asn) + AMP + diphosphate + H(+). The sequence is that of Asparagine--tRNA ligase from Geobacter sulfurreducens (strain ATCC 51573 / DSM 12127 / PCA).